We begin with the raw amino-acid sequence, 1191 residues long: Phosphatidylinositol 3,4,5-trisphosphate 5-phosphatase 1 (1191 aa).

Positions 8-104 (WNHGNITRSK…GLVTHLQYPV (97 aa)) constitute an SH2 domain. Residues 122 to 148 (SVMSPPELPPRNIPMSAGPSEAKDLPL) form a disordered region. An SH3-binding 1 motif is present at residues 127–132 (PELPPR). Serine 246 is subject to Phosphoserine. An NPXY motif 1 motif is present at residues 915–918 (NPNY). Tyrosine 918 is modified (phosphotyrosine). Position 935 is a phosphoserine (serine 935). The residue at position 945 (tyrosine 945) is a Phosphotyrosine. Disordered regions lie at residues 947–994 (QLPK…EARP) and 1021–1191 (YGSV…TAMQ). Pro residues predominate over residues 962–972 (PPTPPSQPPLS). Threonine 964 carries the phosphothreonine modification. Residues serine 967 and serine 972 each carry the phosphoserine modification. The SH3-binding 2 motif lies at 970–975 (PLSPKK). The interaction with DAB2 stretch occupies residues 1015 to 1029 (MFENPLYGSVSSFPK). Positions 1018-1021 (NPLY) match the NPXY motif 2 motif. Position 1021 is a phosphotyrosine (tyrosine 1021). Positions 1032 to 1046 (PRKEQESPKMLRKEP) are enriched in basic and acidic residues. The short motif at 1039 to 1050 (PKMLRKEPPPCP) is the SH3-binding 3 element. The segment covering 1141-1150 (IPAPRPPLPV) has biased composition (pro residues). Residues 1162-1184 (KGRDYRDNTELPHHGKHRQEEGL) show a composition bias toward basic and acidic residues.

This sequence belongs to the inositol 1,4,5-trisphosphate 5-phosphatase family. In terms of assembly, interacts with tyrosine phosphorylated form of SHC1. Interacts with tyrosine phosphorylated form of DOK1. Interacts with tyrosine phosphorylated form of DOK3. Interacts with tyrosine phosphorylated form of SLAMF1/CD150. Interacts with PTPN11/SHP-2 in response to IL-3. Interacts with receptor EPOR. Interacts with receptors MS4A2/FCER1B and FCER1G. Interacts with receptors FCGR2B and FCGR3. Interacts with receptor FCGR2A, leading to regulate gene expression during the phagocytic process. Interacts with GRB2. Interacts with PLCG1. Interacts with tyrosine kinases SRC and TEC. Interacts with CRKL. Interacts with c-Met/MET. Interacts with MILR1 (tyrosine-phosphorylated). Isoform 5 interacts with IL6ST/gp130. Can weakly interact (via NPXY motif 2) with DAB2 (via PID domain); the interaction is impaired by tyrosine phosphorylation of the NPXY motif. Interacts (via SH2 domain) with tyrosine phosphorylated KLRC1 (via ITIM). Interacts with MPL/TPOR. Tyrosine phosphorylated by the members of the SRC family after exposure to a diverse array of extracellular stimuli such as cytokines, growth factors, antibodies, chemokines, integrin ligands and hypertonic and oxidative stress. Phosphorylated upon IgG receptor FCGR2B-binding. In terms of tissue distribution, specifically expressed in immune and hematopoietic cells. Levels vary considerably within this compartment. Lost during erythropoiesis when erythroid cells become Ter119+. Increases substantially with T-cell maturation and when resting B-cells are activated. Also present in mature granulocytes, monocyte/macrophages, mast cells and platelets. Isoform 5 is the only form expressed in embryonic stem (ES) cells and is coexpressed with other isoforms in hematopoietic stem cells, and disappears with differentiation.

It localises to the cytoplasm. It is found in the cell membrane. The protein resides in the membrane raft. Its subcellular location is the cytoskeleton. The enzyme catalyses a 1,2-diacyl-sn-glycero-3-phospho-(1D-myo-inositol-3,4,5-trisphosphate) + H2O = a 1,2-diacyl-sn-glycero-3-phospho-(1D-myo-inositol-3,4-bisphosphate) + phosphate. The catalysed reaction is a 1,2-diacyl-sn-glycero-3-phospho-(1D-myo-inositol-4,5-bisphosphate) + H2O = a 1,2-diacyl-sn-glycero-3-phospho-(1D-myo-inositol 4-phosphate) + phosphate. It catalyses the reaction 1D-myo-inositol 1,3,4,5-tetrakisphosphate + H2O = 1D-myo-inositol 1,3,4-trisphosphate + phosphate. Its activity is regulated as follows. Activated upon translocation to the sites of synthesis of PtdIns(3,4,5)P3 in the membrane. Its function is as follows. Phosphatidylinositol (PtdIns) phosphatase that specifically hydrolyzes the 5-phosphate of phosphatidylinositol-3,4,5-trisphosphate (PtdIns(3,4,5)P3) to produce PtdIns(3,4)P2, thereby negatively regulating the PI3K (phosphoinositide 3-kinase) pathways. Also able to hydrolyze the 5-phosphate of phosphatidylinositol-4,5-bisphosphate (PtdIns(4,5)P3) and inositol 1,3,4,5-tetrakisphosphate. Acts as a negative regulator of B-cell antigen receptor signaling. Mediates signaling from the FC-gamma-RIIB receptor (FCGR2B), playing a central role in terminating signal transduction from activating immune/hematopoietic cell receptor systems. Acts as a negative regulator of myeloid cell proliferation/survival and chemotaxis, mast cell degranulation, immune cells homeostasis, integrin alpha-IIb/beta-3 signaling in platelets and JNK signaling in B-cells. Regulates proliferation of osteoclast precursors, macrophage programming, phagocytosis and activation and is required for endotoxin tolerance. Involved in the control of cell-cell junctions, CD32a signaling in neutrophils and modulation of EGF-induced phospholipase C activity. Key regulator of neutrophil migration, by governing the formation of the leading edge and polarization required for chemotaxis. Modulates FCGR3/CD16-mediated cytotoxicity in NK cells. Mediates the activin/TGF-beta-induced apoptosis through its Smad-dependent expression. This chain is Phosphatidylinositol 3,4,5-trisphosphate 5-phosphatase 1 (Inpp5d), found in Mus musculus (Mouse).